Here is a 145-residue protein sequence, read N- to C-terminus: Transcriptional regulator MraZ (145 aa).

2 consecutive SpoVT-AbrB domains span residues 5–49 and 78–121; these read TYNH…LESE and TYKV…AKEV.

This sequence belongs to the MraZ family. In terms of assembly, forms oligomers.

The protein resides in the cytoplasm. Its subcellular location is the nucleoid. The chain is Transcriptional regulator MraZ from Ureaplasma urealyticum serovar 10 (strain ATCC 33699 / Western).